The following is a 563-amino-acid chain: Chaperonin GroEL 1 (563 aa).

ATP contacts are provided by residues 29–32 (TIGP), 86–90 (DGTTT), glycine 413, 476–478 (NAA), and aspartate 492. The disordered stretch occupies residues 520–545 (DKPEPPSPAGGEGGGDPMGGMGGMGG). The span at 529–545 (GGEGGGDPMGGMGGMGG) shows a compositional bias: gly residues.

The protein belongs to the chaperonin (HSP60) family. Forms a cylinder of 14 subunits composed of two heptameric rings stacked back-to-back. Interacts with the co-chaperonin GroES.

It is found in the cytoplasm. The catalysed reaction is ATP + H2O + a folded polypeptide = ADP + phosphate + an unfolded polypeptide.. Its function is as follows. Together with its co-chaperonin GroES, plays an essential role in assisting protein folding. The GroEL-GroES system forms a nano-cage that allows encapsulation of the non-native substrate proteins and provides a physical environment optimized to promote and accelerate protein folding. This Prochlorococcus marinus (strain SARG / CCMP1375 / SS120) protein is Chaperonin GroEL 1.